The chain runs to 367 residues: NAD(P)H-quinone oxidoreductase subunit 1, chloroplastic (367 aa).

8 helical membrane-spanning segments follow: residues 29–49 (WIPL…LVVV), 96–116 (VLLF…SYLI), 128–148 (INLG…GLLM), 176–196 (LALC…IDIV), 204–224 (ILGW…IAAL), 266–286 (LVSA…PIPI), 304–324 (VISA…FLFL), and 347–367 (FLLP…IALL).

It belongs to the complex I subunit 1 family. In terms of assembly, NDH is composed of at least 16 different subunits, 5 of which are encoded in the nucleus.

The protein localises to the plastid. It localises to the chloroplast thylakoid membrane. The catalysed reaction is a plastoquinone + NADH + (n+1) H(+)(in) = a plastoquinol + NAD(+) + n H(+)(out). The enzyme catalyses a plastoquinone + NADPH + (n+1) H(+)(in) = a plastoquinol + NADP(+) + n H(+)(out). Its function is as follows. NDH shuttles electrons from NAD(P)H:plastoquinone, via FMN and iron-sulfur (Fe-S) centers, to quinones in the photosynthetic chain and possibly in a chloroplast respiratory chain. The immediate electron acceptor for the enzyme in this species is believed to be plastoquinone. Couples the redox reaction to proton translocation, and thus conserves the redox energy in a proton gradient. The sequence is that of NAD(P)H-quinone oxidoreductase subunit 1, chloroplastic from Mesostigma viride (Green alga).